We begin with the raw amino-acid sequence, 885 residues long: Leucine--tRNA ligase (885 aa).

The 'HIGH' region signature appears at 48–58 (PYPSGKLHMGH). The 'KMSKS' region signature appears at 639-643 (TMSKS). K642 is a binding site for ATP.

It belongs to the class-I aminoacyl-tRNA synthetase family.

The protein localises to the cytoplasm. It catalyses the reaction tRNA(Leu) + L-leucine + ATP = L-leucyl-tRNA(Leu) + AMP + diphosphate. This Bordetella parapertussis (strain 12822 / ATCC BAA-587 / NCTC 13253) protein is Leucine--tRNA ligase.